The chain runs to 151 residues: UPAR/Ly6 domain-containing protein rtv (151 aa).

An N-terminal signal peptide occupies residues 1–19 (MQFTSLLLAVIFLISLVSI). Topologically, residues 20–125 (DGLLRRCYQC…QGDLCNGARS (106 aa)) are extracellular. Cystine bridges form between Cys-26/Cys-65, Cys-29/Cys-38, Cys-60/Cys-88, Cys-100/Cys-113, and Cys-115/Cys-120. Asn-45 carries N-linked (GlcNAc...) asparagine glycosylation. A lipid anchor (GPI-anchor amidated asparagine) is attached at Asn-121. Residues 122-151 (GARSWSSAPQMILITMLPLLGSWLLQRMRN) constitute a propeptide, removed in mature form. Residues 126–146 (WSSAPQMILITMLPLLGSWLL) traverse the membrane as a helical segment. Topologically, residues 147–151 (QRMRN) are cytoplasmic.

This sequence belongs to the quiver family.

It localises to the cell membrane. In terms of biological role, required for chitin fiber assembly and organization involved in cuticle formation and tracheal development. This is UPAR/Ly6 domain-containing protein rtv from Drosophila melanogaster (Fruit fly).